Here is a 419-residue protein sequence, read N- to C-terminus: Cytosine permease (419 aa).

Over 1–19 (MSQDNNFSQGPVPQSARKG) the chain is Cytoplasmic. Residues 20–39 (VLALTFVMLGLTFFSASMWT) traverse the membrane as a helical segment. The Periplasmic portion of the chain corresponds to 40 to 51 (GGTLGTGLSYHD). The helical transmembrane segment at 52 to 71 (FFLAVLIGNLLLGIYTSFLG) threads the bilayer. Residues 72 to 100 (YIGAKTGLTTHLLARFSFGVKGSWLPSLL) are Cytoplasmic-facing. Residues 101–120 (LGGTQVGWFGVGVAMFAIPV) traverse the membrane as a helical segment. The Periplasmic segment spans residues 121–127 (GKATGLD). Residues 128-147 (INLLIAVSGLLMTVTVFFGI) form a helical membrane-spanning segment. At 148–152 (SALTV) the chain is on the cytoplasmic side. Residues 153-172 (LSLIAVPAIACLGGYSVWLA) form a helical membrane-spanning segment. Residues 173 to 192 (VNGMGGLDALKAVVPAQPLD) are Periplasmic-facing. A helical transmembrane segment spans residues 193–212 (FNVALALVVGSFISAGTLTA). Topologically, residues 213–221 (DFVRFGRNA) are cytoplasmic. Residues 222–242 (KLAVLVAMVAFFLGNSLMFIF) form a helical membrane-spanning segment. At 243–257 (GAAGAAALGMADISD) the chain is on the periplasmic side. The helical transmembrane segment at 258–277 (VMIAQGLLLPAIVVLGLNIW) threads the bilayer. At 278 to 300 (TTNDNALYASGLGFANITGMSSK) the chain is on the cytoplasmic side. A helical membrane pass occupies residues 301–320 (TLSVINGIIGTVCALWLYNN). A topological domain (periplasmic) is located at residue F321. Residues 322–341 (VGWLTFLSAAIPPVGGVIIA) form a helical membrane-spanning segment. Residues 342–358 (DYLMNRRRYEHFATTRM) lie on the Cytoplasmic side of the membrane. Residues 359–378 (MSVNWVAILAVALGIAAGHW) form a helical membrane-spanning segment. The Periplasmic segment spans residues 379–380 (LP). A helical membrane pass occupies residues 381–400 (GIVPVNAVLGGALSYLILNP). At 401-419 (ILNRKTTAAMTHVEANSVE) the chain is on the cytoplasmic side.

Belongs to the purine-cytosine permease (2.A.39) family.

It localises to the cell inner membrane. In terms of biological role, required for cytosine transport into the cell. The sequence is that of Cytosine permease (codB) from Escherichia coli O157:H7.